Consider the following 439-residue polypeptide: Protein dumpy-20 (439 aa).

Positions 93-116 are disordered; the sequence is GTLSDPSLHGSNSSSSTSDVGSSV. Residues 96 to 116 are compositionally biased toward low complexity; sequence SDPSLHGSNSSSSTSDVGSSV. 2 consecutive BED-type zinc fingers follow at residues 135 to 184 and 349 to 398; these read PTEN…YQKV and KTEH…YNDV. Zn(2+) is bound by residues Cys-154, Cys-157, His-172, His-177, Cys-368, Cys-371, His-386, and His-391.

In terms of biological role, involved in cuticle function and is essential for normal morphological development. The protein is Protein dumpy-20 (dpy-20) of Caenorhabditis briggsae.